Consider the following 184-residue polypeptide: MATGPRYKVPMRRRREVRTDYHQRLRLLKSGKPRLVARVSNKHVRAQLVTPGPQGDETHAAATSADLDEYGWEAPTGNLPSAYLTGYLAGIRALAAGVEEAVLDIGLNTATPGNKVFAVQEGAIDAGLEIPHNDAVLADWDRNRGVHIAEYAEQLDEPLYSGDFDATNLPEHFDEVLGNLQEDE.

The protein belongs to the universal ribosomal protein uL18 family. Part of the 50S ribosomal subunit. Contacts the 5S and 23S rRNAs.

This is one of the proteins that bind and probably mediate the attachment of the 5S RNA into the large ribosomal subunit, where it forms part of the central protuberance. This chain is Large ribosomal subunit protein uL18, found in Haloferax mediterranei (strain ATCC 33500 / DSM 1411 / JCM 8866 / NBRC 14739 / NCIMB 2177 / R-4) (Halobacterium mediterranei).